The sequence spans 154 residues: Probable biofilm-surface layer protein B (154 aa).

The first 30 residues, 1-30 (MLKRTSFVSSLFISSAVLLSILLPSGQAHA), serve as a signal peptide directing secretion.

This sequence belongs to the BslA/BslB family. In terms of assembly, monomer in vitro.

It localises to the secreted. In terms of biological role, has a minor role in biofilm architecture. May contribute to the surface hydrophobicity. This is Probable biofilm-surface layer protein B from Bacillus subtilis (strain 168).